The sequence spans 69 residues: Small cysteine-rich protein (69 aa).

The signal sequence occupies residues 1 to 19 (MKLQLCLVLLLLGVLYVQS). The propeptide occupies 20 to 22 (VPE).

This sequence belongs to the Cnidaria small cysteine-rich protein (SCRiP) family. delta subfamily. Contains 4 disulfide bonds.

Its subcellular location is the secreted. It is found in the nematocyst. Induces neurotoxic symptoms on zebrafish. Has also been claimed to be implied in calcification, but this function seems improbable. The chain is Small cysteine-rich protein from Metridium senile (Brown sea anemone).